Consider the following 799-residue polypeptide: Serine/threonine-protein kinase AfsK (799 aa).

Residues 16-271 (FEVLGRLGAG…QAQLAPHLFG (256 aa)) form the Protein kinase domain. ATP-binding positions include 22-30 (LGAGGMGLV) and K44. S71 carries the phosphoserine; by autocatalysis modification. D138 acts as the Proton acceptor in catalysis. T168 bears the Phosphothreonine; by autocatalysis mark. Disordered regions lie at residues 295 to 343 (RRNG…PAPP) and 393 to 426 (LAASWSRPRPGVNGADPAVPAPAPAPPEASPAGW). Pro residues-rich tracts occupy residues 325 to 343 (HAPPLPPPPAHDPVVPAPP) and 411 to 421 (VPAPAPAPPEA).

Belongs to the protein kinase superfamily. Ser/Thr protein kinase family. As to quaternary structure, interacts (via the N-terminal kinase domain) with KbpA; the interaction prevents autophosphorylation of AfsK. Post-translationally, autophosphorylated mainly on threonine residues. Some phosphorylation on serine residues. Autophosphorylation on Thr-168 is the major site enhancing kinase activity towards AfsR, and is regulated though interaction with KbpA.

It carries out the reaction L-seryl-[protein] + ATP = O-phospho-L-seryl-[protein] + ADP + H(+). The catalysed reaction is L-threonyl-[protein] + ATP = O-phospho-L-threonyl-[protein] + ADP + H(+). In terms of biological role, involved in the regulation of secondary metabolism by phosphorylating, on both Ser and Thr, the AfsR global regulatory protein involved in the control of secondary metabolism. In Streptomyces coelicolor (strain ATCC BAA-471 / A3(2) / M145), this protein is Serine/threonine-protein kinase AfsK (afsK).